Here is a 153-residue protein sequence, read N- to C-terminus: Nucleoside diphosphate kinase (153 aa).

Ala2 bears the N-acetylalanine mark. The ATP site is built by Lys13, Phe61, Arg89, Thr95, Arg106, and Asn116. Residue His119 is the Pros-phosphohistidine intermediate of the active site. The residue at position 126 (Ser126) is a Phosphoserine.

It belongs to the NDK family. In terms of assembly, homohexamer. Mg(2+) serves as cofactor.

The protein localises to the cytoplasm. The protein resides in the cytoskeleton. It carries out the reaction a 2'-deoxyribonucleoside 5'-diphosphate + ATP = a 2'-deoxyribonucleoside 5'-triphosphate + ADP. The enzyme catalyses a ribonucleoside 5'-diphosphate + ATP = a ribonucleoside 5'-triphosphate + ADP. Major role in the synthesis of nucleoside triphosphates other than ATP. The ATP gamma phosphate is transferred to the NDP beta phosphate via a ping-pong mechanism, using a phosphorylated active-site intermediate. In Drosophila melanogaster (Fruit fly), this protein is Nucleoside diphosphate kinase (awd).